We begin with the raw amino-acid sequence, 230 residues long: Pyridoxine/pyridoxamine 5'-phosphate oxidase (230 aa).

Substrate is bound by residues R21–Y24 and K87. FMN contacts are provided by residues R82–K87, Y97–T98, K104, and Q126. Substrate contacts are provided by Y144, R148, and S152. FMN contacts are provided by residues Q161–S162 and W207. R213 to H215 is a binding site for substrate. R217 provides a ligand contact to FMN.

It belongs to the pyridoxamine 5'-phosphate oxidase family. Homodimer. Requires FMN as cofactor.

It catalyses the reaction pyridoxamine 5'-phosphate + O2 + H2O = pyridoxal 5'-phosphate + H2O2 + NH4(+). The catalysed reaction is pyridoxine 5'-phosphate + O2 = pyridoxal 5'-phosphate + H2O2. It functions in the pathway cofactor metabolism; pyridoxal 5'-phosphate salvage; pyridoxal 5'-phosphate from pyridoxamine 5'-phosphate: step 1/1. The protein operates within cofactor metabolism; pyridoxal 5'-phosphate salvage; pyridoxal 5'-phosphate from pyridoxine 5'-phosphate: step 1/1. Functionally, catalyzes the oxidation of either pyridoxine 5'-phosphate (PNP) or pyridoxamine 5'-phosphate (PMP) into pyridoxal 5'-phosphate (PLP). This chain is Pyridoxine/pyridoxamine 5'-phosphate oxidase, found in Mycolicibacterium smegmatis (strain ATCC 700084 / mc(2)155) (Mycobacterium smegmatis).